Reading from the N-terminus, the 331-residue chain is Elongation factor Ts, mitochondrial (331 aa).

The interval 254–295 (SPLTVGEMPEVREEEGEKKDGDKQDEEERSTDSDEDETQMLR) is disordered. Basic and acidic residues predominate over residues 262 to 275 (PEVREEEGEKKDGD). Over residues 276–291 (KQDEEERSTDSDEDET) the composition is skewed to acidic residues.

The protein belongs to the EF-Ts family.

It is found in the mitochondrion. Its function is as follows. Associates with the EF-Tu.GDP complex and induces the exchange of GDP to GTP. It remains bound to the aminoacyl-tRNA.EF-Tu.GTP complex up to the GTP hydrolysis stage on the ribosome. The chain is Elongation factor Ts, mitochondrial from Branchiostoma floridae (Florida lancelet).